The following is a 160-amino-acid chain: Transmembrane protein 220 (160 aa).

Helical transmembrane passes span Pro-3–Val-23, Ala-30–Asn-50, Ile-62–Leu-82, Gly-100–Gly-120, and Leu-125–Asn-145.

It localises to the membrane. This chain is Transmembrane protein 220 (TMEM220), found in Homo sapiens (Human).